A 311-amino-acid chain; its full sequence is Inositol oxygenase 1 (311 aa).

The segment covering 1–11 (MTILIDRHSDQ) has biased composition (basic and acidic residues). The interval 1–29 (MTILIDRHSDQNDAGDEIVEKNQGNGKEE) is disordered. Substrate-binding positions include R52 and 109–111 (DES). Fe cation is bound by residues H122, H147, and D148. Substrate contacts are provided by residues K151 and 168 to 169 (GD). Residues H220, H246, and D279 each contribute to the Fe cation site. Substrate is bound at residue 246–247 (HS).

This sequence belongs to the myo-inositol oxygenase family. It depends on Fe cation as a cofactor. Expressed in roots, young leaves, stems, flowers and siliques.

Its subcellular location is the cytoplasm. It carries out the reaction myo-inositol + O2 = D-glucuronate + H2O + H(+). Its pathway is polyol metabolism; myo-inositol degradation into D-glucuronate; D-glucuronate from myo-inositol: step 1/1. Catalyzes the oxygenative cleavage of myo-inositol to D-glucuronate. Involved in the biosynthesis of UDP-glucuronic acid (UDP-GlcA), providing nucleotide sugars for cell-wall polymers. May be also involved in plant ascorbate biosynthesis. This is Inositol oxygenase 1 (MIOX1) from Arabidopsis thaliana (Mouse-ear cress).